We begin with the raw amino-acid sequence, 319 residues long: ATP-dependent 6-phosphofructokinase (319 aa).

ATP is bound at residue Gly11. 21 to 25 (RAVVR) contributes to the ADP binding site. ATP contacts are provided by residues 72-73 (RC) and 102-105 (GDGS). Residue Asp103 coordinates Mg(2+). 125 to 127 (TID) contacts substrate. Asp127 acts as the Proton acceptor in catalysis. Arg154 lines the ADP pocket. Substrate contacts are provided by residues Arg162 and 169–171 (MGR). Residues 185 to 187 (GAE), Arg211, and 213 to 215 (KKH) each bind ADP. Substrate is bound by residues Glu222, Arg243, and 249-252 (HVQR).

Belongs to the phosphofructokinase type A (PFKA) family. ATP-dependent PFK group I subfamily. Prokaryotic clade 'B1' sub-subfamily. As to quaternary structure, homotetramer. Mg(2+) serves as cofactor.

The protein resides in the cytoplasm. It carries out the reaction beta-D-fructose 6-phosphate + ATP = beta-D-fructose 1,6-bisphosphate + ADP + H(+). It participates in carbohydrate degradation; glycolysis; D-glyceraldehyde 3-phosphate and glycerone phosphate from D-glucose: step 3/4. Its activity is regulated as follows. Allosterically activated by ADP and other diphosphonucleosides, and allosterically inhibited by phosphoenolpyruvate. Catalyzes the phosphorylation of D-fructose 6-phosphate to fructose 1,6-bisphosphate by ATP, the first committing step of glycolysis. This Bacillus cereus (strain B4264) protein is ATP-dependent 6-phosphofructokinase.